We begin with the raw amino-acid sequence, 139 residues long: ATP synthase epsilon chain (139 aa).

Belongs to the ATPase epsilon chain family. In terms of assembly, F-type ATPases have 2 components, CF(1) - the catalytic core - and CF(0) - the membrane proton channel. CF(1) has five subunits: alpha(3), beta(3), gamma(1), delta(1), epsilon(1). CF(0) has three main subunits: a, b and c.

It is found in the cell inner membrane. Its function is as follows. Produces ATP from ADP in the presence of a proton gradient across the membrane. The polypeptide is ATP synthase epsilon chain (Pseudomonas syringae pv. tomato (strain ATCC BAA-871 / DC3000)).